The chain runs to 86 residues: UPF0147 protein PYRAB16980 (86 aa).

It belongs to the UPF0147 family.

The polypeptide is UPF0147 protein PYRAB16980 (Pyrococcus abyssi (strain GE5 / Orsay)).